Consider the following 153-residue polypeptide: Glucose-6-phosphate 1-dehydrogenase (153 aa).

NADP(+)-binding residues include arginine 21 and lysine 120. D-glucose 6-phosphate is bound at residue lysine 120.

The protein belongs to the glucose-6-phosphate dehydrogenase family.

It is found in the cytoplasm. The protein resides in the cytosol. The catalysed reaction is D-glucose 6-phosphate + NADP(+) = 6-phospho-D-glucono-1,5-lactone + NADPH + H(+). It participates in carbohydrate degradation; pentose phosphate pathway; D-ribulose 5-phosphate from D-glucose 6-phosphate (oxidative stage): step 1/3. Its function is as follows. Cytosolic glucose-6-phosphate dehydrogenase that catalyzes the first and rate-limiting step of the oxidative branch within the pentose phosphate pathway/shunt, an alternative route to glycolysis for the dissimilation of carbohydrates and a major source of reducing power and metabolic intermediates for fatty acid and nucleic acid biosynthetic processes. The protein is Glucose-6-phosphate 1-dehydrogenase (ZW) of Hyalophora cecropia (Cecropia moth).